The chain runs to 382 residues: Histidine biosynthesis bifunctional protein HisB (382 aa).

The segment at 1–190 (MQKIVFIDRD…EIYEFLRLPA (190 aa)) is histidinol-phosphatase. Catalysis depends on aspartate 8, which acts as the Nucleophile. Mg(2+) is bound by residues aspartate 8, aspartate 10, and aspartate 129. The active-site Proton donor is aspartate 10. The imidazoleglycerol-phosphate dehydratase stretch occupies residues 191–382 (RTALVERNTK…DNLPSTKGVL (192 aa)).

The protein in the N-terminal section; belongs to the histidinol-phosphatase family. This sequence in the C-terminal section; belongs to the imidazoleglycerol-phosphate dehydratase family. It depends on Mg(2+) as a cofactor.

Its subcellular location is the cytoplasm. It catalyses the reaction D-erythro-1-(imidazol-4-yl)glycerol 3-phosphate = 3-(imidazol-4-yl)-2-oxopropyl phosphate + H2O. The enzyme catalyses L-histidinol phosphate + H2O = L-histidinol + phosphate. It functions in the pathway amino-acid biosynthesis; L-histidine biosynthesis; L-histidine from 5-phospho-alpha-D-ribose 1-diphosphate: step 6/9. Its pathway is amino-acid biosynthesis; L-histidine biosynthesis; L-histidine from 5-phospho-alpha-D-ribose 1-diphosphate: step 8/9. The chain is Histidine biosynthesis bifunctional protein HisB from Spirosoma linguale (strain ATCC 33905 / DSM 74 / LMG 10896 / Claus 1).